Consider the following 163-residue polypeptide: SsrA-binding protein (163 aa).

The protein belongs to the SmpB family.

It is found in the cytoplasm. Required for rescue of stalled ribosomes mediated by trans-translation. Binds to transfer-messenger RNA (tmRNA), required for stable association of tmRNA with ribosomes. tmRNA and SmpB together mimic tRNA shape, replacing the anticodon stem-loop with SmpB. tmRNA is encoded by the ssrA gene; the 2 termini fold to resemble tRNA(Ala) and it encodes a 'tag peptide', a short internal open reading frame. During trans-translation Ala-aminoacylated tmRNA acts like a tRNA, entering the A-site of stalled ribosomes, displacing the stalled mRNA. The ribosome then switches to translate the ORF on the tmRNA; the nascent peptide is terminated with the 'tag peptide' encoded by the tmRNA and targeted for degradation. The ribosome is freed to recommence translation, which seems to be the essential function of trans-translation. This chain is SsrA-binding protein, found in Shewanella baltica (strain OS223).